A 280-amino-acid polypeptide reads, in one-letter code: Bifunctional protein FolD (280 aa).

NADP(+)-binding positions include 164 to 166 (GRS), Ser-189, and Val-230.

This sequence belongs to the tetrahydrofolate dehydrogenase/cyclohydrolase family. Homodimer.

It catalyses the reaction (6R)-5,10-methylene-5,6,7,8-tetrahydrofolate + NADP(+) = (6R)-5,10-methenyltetrahydrofolate + NADPH. It carries out the reaction (6R)-5,10-methenyltetrahydrofolate + H2O = (6R)-10-formyltetrahydrofolate + H(+). The protein operates within one-carbon metabolism; tetrahydrofolate interconversion. Functionally, catalyzes the oxidation of 5,10-methylenetetrahydrofolate to 5,10-methenyltetrahydrofolate and then the hydrolysis of 5,10-methenyltetrahydrofolate to 10-formyltetrahydrofolate. This is Bifunctional protein FolD from Geotalea daltonii (strain DSM 22248 / JCM 15807 / FRC-32) (Geobacter daltonii).